We begin with the raw amino-acid sequence, 159 residues long: 3-hydroxyacyl-[acyl-carrier-protein] dehydratase FabZ (159 aa).

Histidine 58 is a catalytic residue.

It belongs to the thioester dehydratase family. FabZ subfamily.

It localises to the cytoplasm. The catalysed reaction is a (3R)-hydroxyacyl-[ACP] = a (2E)-enoyl-[ACP] + H2O. Its function is as follows. Involved in unsaturated fatty acids biosynthesis. Catalyzes the dehydration of short chain beta-hydroxyacyl-ACPs and long chain saturated and unsaturated beta-hydroxyacyl-ACPs. The chain is 3-hydroxyacyl-[acyl-carrier-protein] dehydratase FabZ from Helicobacter pylori (strain G27).